A 21-amino-acid chain; its full sequence is Agglutinin beta-1 chain (21 aa).

Polar residues predominate over residues 1–10 (NGPNGKSQSI). Positions 1–21 (NGPNGKSQSIIVGPWGDRVTN) are disordered.

It belongs to the jacalin lectin family. As to quaternary structure, formed of four alpha chains and four beta chains.

Its function is as follows. D-galactose-specific lectin, binds the T-antigen structure Gal-beta1,3-GalNAc. This is Agglutinin beta-1 chain from Maclura pomifera (Osage orange).